Reading from the N-terminus, the 380-residue chain is Glucose-1-phosphate adenylyltransferase (380 aa).

Alpha-D-glucose 1-phosphate contacts are provided by residues Gly164, 179–180, and Ser190; that span reads EK.

The protein belongs to the bacterial/plant glucose-1-phosphate adenylyltransferase family. Homotetramer.

The catalysed reaction is alpha-D-glucose 1-phosphate + ATP + H(+) = ADP-alpha-D-glucose + diphosphate. The protein operates within glycan biosynthesis; glycogen biosynthesis. Its function is as follows. Involved in the biosynthesis of ADP-glucose, a building block required for the elongation reactions to produce glycogen. Catalyzes the reaction between ATP and alpha-D-glucose 1-phosphate (G1P) to produce pyrophosphate and ADP-Glc. This is Glucose-1-phosphate adenylyltransferase from Streptococcus gordonii (strain Challis / ATCC 35105 / BCRC 15272 / CH1 / DL1 / V288).